We begin with the raw amino-acid sequence, 316 residues long: tRNA dimethylallyltransferase (316 aa).

17-24 (GPTASGKT) is a binding site for ATP. 19-24 (TASGKT) contacts substrate. Interaction with substrate tRNA regions lie at residues 42–45 (DSAL), 166–170 (QRLSR), and 247–252 (RCVGYR).

It belongs to the IPP transferase family. Monomer. Mg(2+) serves as cofactor.

It carries out the reaction adenosine(37) in tRNA + dimethylallyl diphosphate = N(6)-dimethylallyladenosine(37) in tRNA + diphosphate. In terms of biological role, catalyzes the transfer of a dimethylallyl group onto the adenine at position 37 in tRNAs that read codons beginning with uridine, leading to the formation of N6-(dimethylallyl)adenosine (i(6)A). This is tRNA dimethylallyltransferase from Citrobacter koseri (strain ATCC BAA-895 / CDC 4225-83 / SGSC4696).